A 409-amino-acid polypeptide reads, in one-letter code: F-box/kelch-repeat protein At1g48625 (409 aa).

Positions 2–49 constitute an F-box domain; that stretch reads ATMISNLPRDLMEEILSRVPLKSMRAVRLTCKNWHTLSITISESLAKM. 2 Kelch repeats span residues 169 to 218 and 221 to 266; these read FIDY…LKGN and WCAR…ILSC.

In Arabidopsis thaliana (Mouse-ear cress), this protein is F-box/kelch-repeat protein At1g48625.